Reading from the N-terminus, the 151-residue chain is Large ribosomal subunit protein bL9 (151 aa).

This sequence belongs to the bacterial ribosomal protein bL9 family.

Functionally, binds to the 23S rRNA. The protein is Large ribosomal subunit protein bL9 of Lactobacillus delbrueckii subsp. bulgaricus (strain ATCC BAA-365 / Lb-18).